Here is a 442-residue protein sequence, read N- to C-terminus: Putative FNIP repeat-containing protein L170 (442 aa).

FNIP repeat units follow at residues 213 to 252 (FNSS…IGRG), 253 to 294 (FNSE…LGCF), and 295 to 348 (FNQS…FGMY).

This Acanthamoeba polyphaga mimivirus (APMV) protein is Putative FNIP repeat-containing protein L170.